Reading from the N-terminus, the 187-residue chain is UPF0302 protein SERP1032 (187 aa).

This sequence belongs to the UPF0302 family.

This is UPF0302 protein SERP1032 from Staphylococcus epidermidis (strain ATCC 35984 / DSM 28319 / BCRC 17069 / CCUG 31568 / BM 3577 / RP62A).